The chain runs to 141 residues: Nucleoside triphosphatase NudI (141 aa).

Residues 1 to 141 enclose the Nudix hydrolase domain; the sequence is MRQRTIVCPL…RKTLSLKGLL (141 aa). Residues 38–59 carry the Nudix box motif; that stretch reads GGVEPGERIEDALRREIREELG.

It belongs to the Nudix hydrolase family. NudI subfamily. Monomer. Mg(2+) is required as a cofactor.

The enzyme catalyses a ribonucleoside 5'-triphosphate + H2O = a ribonucleoside 5'-phosphate + diphosphate + H(+). The catalysed reaction is a 2'-deoxyribonucleoside 5'-triphosphate + H2O = a 2'-deoxyribonucleoside 5'-phosphate + diphosphate + H(+). It catalyses the reaction dUTP + H2O = dUMP + diphosphate + H(+). It carries out the reaction dTTP + H2O = dTMP + diphosphate + H(+). The enzyme catalyses dCTP + H2O = dCMP + diphosphate + H(+). Its function is as follows. Catalyzes the hydrolysis of nucleoside triphosphates, with a preference for pyrimidine deoxynucleoside triphosphates (dUTP, dTTP and dCTP). This chain is Nucleoside triphosphatase NudI, found in Escherichia fergusonii (strain ATCC 35469 / DSM 13698 / CCUG 18766 / IAM 14443 / JCM 21226 / LMG 7866 / NBRC 102419 / NCTC 12128 / CDC 0568-73).